The sequence spans 178 residues: NADH-ubiquinone oxidoreductase chain 6 (178 aa).

5 helical membrane passes run 1 to 21 (MMTYIVTILSTIFVVSFVGFS), 25 to 45 (SPIYGGVGLIVSGGVGCGIVL), 48 to 68 (GGSFLGLMVFLIYLGGMLVVF), 89 to 109 (VLLTFLLGLVGEVVLMIYLLL), and 152 to 172 (YGYWLVIVSGWSLVTCIIVVM).

Belongs to the complex I subunit 6 family.

The protein resides in the mitochondrion membrane. The catalysed reaction is a ubiquinone + NADH + 5 H(+)(in) = a ubiquinol + NAD(+) + 4 H(+)(out). Core subunit of the mitochondrial membrane respiratory chain NADH dehydrogenase (Complex I) that is believed to belong to the minimal assembly required for catalysis. Complex I functions in the transfer of electrons from NADH to the respiratory chain. The immediate electron acceptor for the enzyme is believed to be ubiquinone. The sequence is that of NADH-ubiquinone oxidoreductase chain 6 (MT-ND6) from Pseudosoriculus fumidus (Taiwanese brown-toothed shrew).